A 769-amino-acid polypeptide reads, in one-letter code: Zinc finger protein 585B (769 aa).

A compositionally biased stretch (polar residues) spans 1–12 (MPASWTSPQKSS). The interval 1–23 (MPASWTSPQKSSALAPDDHGSSY) is disordered. In terms of domain architecture, KRAB spans 27 to 97 (VSFRDVVINF…QGERPRHSCP (71 aa)). 21 consecutive C2H2-type zinc fingers follow at residues 158 to 180 (YVCI…QKAH), 186 to 208 (YKCN…QRIH), 214 to 236 (YQCS…EKIH), 242 to 264 (HECT…QKIH), 270 to 292 (YICI…RRIH), 298 to 320 (YECN…QRIH), 354 to 376 (SICT…QRIH), 382 to 404 (YACS…QRIH), 410 to 432 (YVCM…QIIH), 438 to 460 (YKCG…KRIH), 466 to 488 (YVCN…QKTH), 494 to 516 (YICS…QRIH), 522 to 544 (YECN…QKIH), 550 to 572 (YECH…QKIH), 578 to 600 (YVCT…QRIH), 606 to 628 (YECS…QPLH), 634 to 656 (YVCA…QKTH), 662 to 684 (YICS…HRIH), 690 to 712 (YECS…QRIH), 718 to 740 (YVCA…QTTH), and 746 to 768 (YKCG…QGSH).

The protein belongs to the krueppel C2H2-type zinc-finger protein family.

The protein resides in the nucleus. May be involved in transcriptional regulation. The sequence is that of Zinc finger protein 585B (ZNF585B) from Pongo abelii (Sumatran orangutan).